The sequence spans 314 residues: Cyclic di-GMP binding protein TDE_0214 (314 aa).

The PilZ domain maps to 146–234 (QKRRNERVVI…KTVRTEPVEG (89 aa)). Residues 288–300 (TPVSSPIGTNTAP) show a composition bias toward polar residues. The disordered stretch occupies residues 288–314 (TPVSSPIGTNTAPLTPPPADSAPEQIS).

Functionally, cyclic-di-GMP binding protein that plays important roles in motility, chemotaxis, biofilm formation and virulence. This chain is Cyclic di-GMP binding protein TDE_0214, found in Treponema denticola (strain ATCC 35405 / DSM 14222 / CIP 103919 / JCM 8153 / KCTC 15104).